We begin with the raw amino-acid sequence, 108 residues long: MVNLFPVFTLIVIITILITTRELSTTMLIVSLVTDYIIINTQYTEQQHENNTFSMPQKNSFNESYNKDKKSNTHIPYQWLAPELKEAESKYWWGNYDPHSEPVLAGAS.

Residues leucine 10 to leucine 32 form a helical membrane-spanning segment. The span at glutamate 49–serine 64 shows a compositional bias: polar residues. The interval glutamate 49–lysine 69 is disordered. Asparagine 50 and asparagine 62 each carry an N-linked (GlcNAc...) asparagine; by host glycan.

It belongs to the asfivirus H108R family.

The protein resides in the virion membrane. The protein is Inner membrane protein H108R of African swine fever virus (strain Badajoz 1971 Vero-adapted) (Ba71V).